Here is a 214-residue protein sequence, read N- to C-terminus: Urease accessory protein UreG 2 (214 aa).

Position 22–29 (22–29 (GPVGSGKT)) interacts with GTP.

The protein belongs to the SIMIBI class G3E GTPase family. UreG subfamily. Homodimer. UreD, UreF and UreG form a complex that acts as a GTP-hydrolysis-dependent molecular chaperone, activating the urease apoprotein by helping to assemble the nickel containing metallocenter of UreC. The UreE protein probably delivers the nickel.

It is found in the cytoplasm. Its function is as follows. Facilitates the functional incorporation of the urease nickel metallocenter. This process requires GTP hydrolysis, probably effectuated by UreG. This Bradyrhizobium sp. (strain BTAi1 / ATCC BAA-1182) protein is Urease accessory protein UreG 2.